Reading from the N-terminus, the 238-residue chain is Opacity protein opA60 (238 aa).

Residue Ala1 is a signal peptide.

This sequence belongs to the opacity porin family.

Its subcellular location is the cell outer membrane. Implicated in a number of adherence functions. OPA proteins are implicated in pathogenesis and are subject to phase variation. The protein is Opacity protein opA60 (opaH) of Neisseria gonorrhoeae.